Reading from the N-terminus, the 388-residue chain is 1-deoxy-D-xylulose 5-phosphate reductoisomerase (388 aa).

Positions 10, 11, 12, 13, 37, 38, and 122 each coordinate NADPH. Lysine 123 is a 1-deoxy-D-xylulose 5-phosphate binding site. Residue glutamate 124 coordinates NADPH. Aspartate 148 is a Mn(2+) binding site. Positions 149, 150, 179, and 202 each coordinate 1-deoxy-D-xylulose 5-phosphate. Glutamate 150 is a Mn(2+) binding site. Glycine 208 contributes to the NADPH binding site. Positions 215, 220, 221, and 224 each coordinate 1-deoxy-D-xylulose 5-phosphate. A Mn(2+)-binding site is contributed by glutamate 224.

This sequence belongs to the DXR family. Mg(2+) is required as a cofactor. The cofactor is Mn(2+).

It catalyses the reaction 2-C-methyl-D-erythritol 4-phosphate + NADP(+) = 1-deoxy-D-xylulose 5-phosphate + NADPH + H(+). The protein operates within isoprenoid biosynthesis; isopentenyl diphosphate biosynthesis via DXP pathway; isopentenyl diphosphate from 1-deoxy-D-xylulose 5-phosphate: step 1/6. Catalyzes the NADPH-dependent rearrangement and reduction of 1-deoxy-D-xylulose-5-phosphate (DXP) to 2-C-methyl-D-erythritol 4-phosphate (MEP). In Laribacter hongkongensis (strain HLHK9), this protein is 1-deoxy-D-xylulose 5-phosphate reductoisomerase.